We begin with the raw amino-acid sequence, 300 residues long: Cytochrome f (300 aa).

A signal peptide spans 1–32 (MMTYLSKQFSKLLFGQLLFLFIGNLLLKPVQA). Heme is bound by residues Tyr-33, Cys-53, Cys-56, and His-57. A helical transmembrane segment spans residues 267-287 (LKTFIAFCVTVFIGQLAFVLK).

The protein belongs to the cytochrome f family. As to quaternary structure, the 4 large subunits of the cytochrome b6-f complex are cytochrome b6, subunit IV (17 kDa polypeptide, petD), cytochrome f and the Rieske protein, while the 4 small subunits are PetG, PetL, PetM and PetN. The complex functions as a dimer. The cofactor is heme.

It localises to the plastid. The protein resides in the chloroplast thylakoid membrane. Its function is as follows. Component of the cytochrome b6-f complex, which mediates electron transfer between photosystem II (PSII) and photosystem I (PSI), cyclic electron flow around PSI, and state transitions. This Cyanidioschyzon merolae (strain NIES-3377 / 10D) (Unicellular red alga) protein is Cytochrome f.